Reading from the N-terminus, the 269-residue chain is Hydroxyethylthiazole kinase (269 aa).

A substrate-binding site is contributed by methionine 46. Arginine 122 and threonine 168 together coordinate ATP. Glycine 195 is a substrate binding site.

This sequence belongs to the Thz kinase family. The cofactor is Mg(2+).

The enzyme catalyses 5-(2-hydroxyethyl)-4-methylthiazole + ATP = 4-methyl-5-(2-phosphooxyethyl)-thiazole + ADP + H(+). It participates in cofactor biosynthesis; thiamine diphosphate biosynthesis; 4-methyl-5-(2-phosphoethyl)-thiazole from 5-(2-hydroxyethyl)-4-methylthiazole: step 1/1. Functionally, catalyzes the phosphorylation of the hydroxyl group of 4-methyl-5-beta-hydroxyethylthiazole (THZ). This Geobacillus kaustophilus (strain HTA426) protein is Hydroxyethylthiazole kinase.